The primary structure comprises 326 residues: Malate dehydrogenase (326 aa).

Residue 11-17 (GAAGQIG) participates in NAD(+) binding. Substrate is bound by residues Arg92 and Arg98. NAD(+) is bound by residues Asn105, Gln112, and 129-131 (VGN). Residues Asn131 and Arg162 each coordinate substrate. His187 acts as the Proton acceptor in catalysis.

The protein belongs to the LDH/MDH superfamily. MDH type 2 family.

The enzyme catalyses (S)-malate + NAD(+) = oxaloacetate + NADH + H(+). In terms of biological role, catalyzes the reversible oxidation of malate to oxaloacetate. The protein is Malate dehydrogenase of Halorhodospira halophila (strain DSM 244 / SL1) (Ectothiorhodospira halophila (strain DSM 244 / SL1)).